Consider the following 216-residue polypeptide: Elongation factor 1-beta (216 aa).

This sequence belongs to the EF-1-beta/EF-1-delta family. As to quaternary structure, EF-1 is composed of 4 subunits: alpha, beta, delta, and gamma. Interacts with actin.

The protein localises to the cytoplasm. Functionally, EF-1-beta and EF-1-delta stimulate the exchange of GDP bound to EF-1-alpha to GTP. In Dictyostelium discoideum (Social amoeba), this protein is Elongation factor 1-beta (efa1B).